Consider the following 86-residue polypeptide: Large ribosomal subunit protein eL43 (86 aa).

The C4-type zinc finger occupies 38–59 (CPVCGRKAVRRISTGIWQCQKC).

This sequence belongs to the eukaryotic ribosomal protein eL43 family. Zn(2+) serves as cofactor.

This chain is Large ribosomal subunit protein eL43, found in Thermococcus gammatolerans (strain DSM 15229 / JCM 11827 / EJ3).